We begin with the raw amino-acid sequence, 398 residues long: Ubiquitin carboxyl-terminal hydrolase 17-like protein 6 (398 aa).

The USP domain occupies 80-375 (AGLQNMGNTC…QAYVLFYIQK (296 aa)). The active-site Nucleophile is the Cys89. His334 acts as the Proton acceptor in catalysis.

Belongs to the peptidase C19 family. USP17 subfamily.

It is found in the nucleus. The protein localises to the cytoplasm. It carries out the reaction Thiol-dependent hydrolysis of ester, thioester, amide, peptide and isopeptide bonds formed by the C-terminal Gly of ubiquitin (a 76-residue protein attached to proteins as an intracellular targeting signal).. Functionally, deubiquitinating enzyme that removes conjugated ubiquitin from specific proteins to regulate different cellular processes that may include cell proliferation, progression through the cell cycle, cell migration, and the cellular response to viral infection. Seems to be non-functional in the regulation of apoptosis. The polypeptide is Ubiquitin carboxyl-terminal hydrolase 17-like protein 6 (USP17L6P) (Homo sapiens (Human)).